The following is a 165-amino-acid chain: Transcription antitermination protein NusB (165 aa).

The protein belongs to the NusB family.

Its function is as follows. Involved in transcription antitermination. Required for transcription of ribosomal RNA (rRNA) genes. Binds specifically to the boxA antiterminator sequence of the ribosomal RNA (rrn) operons. The sequence is that of Transcription antitermination protein NusB from Rhodococcus erythropolis (strain PR4 / NBRC 100887).